The following is a 280-amino-acid chain: Protein scylla (280 aa).

The interval 39–96 is disordered; sequence LMSKKAKTTTGGSSNGSNATATSTTTSTSSSIKHKQPAGSSNNNVGQSQSKKTKPSGS. Low complexity-rich tracts occupy residues 46–69 and 77–96; these read TTTG…TSSS and GSSN…PSGS.

Belongs to the DDIT4 family.

Its subcellular location is the cytoplasm. In terms of biological role, inhibits cell growth by regulating the Tor pathway upstream of the Tsc1-Tsc2 complex and downstream of Akt1. Acts as a cell death activator during head development. This chain is Protein scylla (scyl), found in Drosophila melanogaster (Fruit fly).